The following is a 2032-amino-acid chain: Transient receptor potential channel (2032 aa).

Residues 129-139 (KKTRKHRRRRS) are compositionally biased toward basic residues. Disordered regions lie at residues 129-162 (KKTR…GHAI), 197-223 (QSKG…AVPT), 831-860 (KKAM…MGGV), 912-945 (ANPM…GSQT), and 1120-1211 (AAEH…EAGN). Polar residues-rich tracts occupy residues 839-855 (SRPS…QSTE), 935-945 (SLTSASDGSQT), and 1120-1129 (AAEHQNDMNY). Residues 1130–1149 (SSSSSSSSSSSSSSSSSDSS) are compositionally biased toward low complexity. Residues 1171-1185 (TSQGSAQSLNITSLF) are compositionally biased toward polar residues. 5 consecutive transmembrane segments (helical) span residues 1310–1330 (FWSW…TLLV), 1332–1352 (TPPR…AFGL), 1374–1394 (VCSF…VGFF), 1439–1459 (MIQN…SFGL), and 1535–1555 (LMTF…IAIF). Disordered stretches follow at residues 1753-1779 (GTDP…RIRR), 1853-1909 (HPER…SRDQ), 1935-1982 (EEED…EEVD), and 1999-2032 (LNEE…CSDV). The segment covering 1935-1947 (EEEDEEEDDEEDD) has biased composition (acidic residues). The span at 1951–1962 (RHHIHPRRKSSR) shows a compositional bias: basic residues. The span at 2016–2032 (SPSSSRADLTSQKCSDV) shows a compositional bias: polar residues.

Belongs to the transient receptor (TC 1.A.4) family. LTrpC subfamily. As to expression, gonads.

The protein resides in the membrane. Required for initiation and continuation of postembryonic mitotic cell divisions of gonadal cells Z1 and Z4. Zygotic expression is necessary for hermaphrodite fertility. May be a cation channel. The polypeptide is Transient receptor potential channel (gon-2) (Caenorhabditis elegans).